The primary structure comprises 327 residues: Aspartate--ammonia ligase (327 aa).

Belongs to the class-II aminoacyl-tRNA synthetase family. AsnA subfamily.

It is found in the cytoplasm. The catalysed reaction is L-aspartate + NH4(+) + ATP = L-asparagine + AMP + diphosphate + H(+). It functions in the pathway amino-acid biosynthesis; L-asparagine biosynthesis; L-asparagine from L-aspartate (ammonia route): step 1/1. The sequence is that of Aspartate--ammonia ligase from Bacillus anthracis (strain A0248).